The sequence spans 1130 residues: Putative beta-hexosaminidase (1130 aa).

The signal sequence occupies residues 1 to 23 (MKWVKSGVGILGILLIICHAVTS). Low complexity-rich tracts occupy residues 1001–1030 (PGQMRALGQQAGQALRGQGQQTGQQTLPAQ) and 1037–1072 (LTGQAAGTGVAGQSGQQPSAAGQGTQQGLPGQQRTG). 2 disordered regions span residues 1001–1075 (PGQM…GVVP) and 1102–1130 (QMRGQGQIPQTQGAVAGAGQSRVPQQQAG).

Belongs to the glycosyl hydrolase 20 family. As to expression, prismatic layer of shell (at protein level). Expressed primarily in the mantle with highest level in the mantle edge and lower level in the mantle pallium.

It is found in the secreted. It carries out the reaction Hydrolysis of terminal non-reducing N-acetyl-D-hexosamine residues in N-acetyl-beta-D-hexosaminides.. It functions in the pathway glycan degradation; chitin degradation. In Pinctada maxima (Silver-lipped pearl oyster), this protein is Putative beta-hexosaminidase.